The following is a 276-amino-acid chain: Protein MGF 360-15R (276 aa).

It belongs to the asfivirus MGF 360 family.

Its function is as follows. Plays a role in virus cell tropism, and may be required for efficient virus replication in macrophages. The protein is Protein MGF 360-15R of African swine fever virus (isolate Warthog/Namibia/Wart80/1980) (ASFV).